A 245-amino-acid polypeptide reads, in one-letter code: DNA repair protein RecO (245 aa).

Belongs to the RecO family.

In terms of biological role, involved in DNA repair and RecF pathway recombination. The polypeptide is DNA repair protein RecO (Porphyromonas gingivalis (strain ATCC 33277 / DSM 20709 / CIP 103683 / JCM 12257 / NCTC 11834 / 2561)).